Reading from the N-terminus, the 495-residue chain is Keratin, type II cytoskeletal 74 (495 aa).

Residues 1–105 (MASCHTAGHR…DPEIQKVRAQ (105 aa)) are head. The interval 106–141 (EREQIKALNDKFASFIDKVRFLEQQNQVLQTKWELL) is coil 1A. An IF rod domain is found at 106-419 (EREQIKALND…KLLEGEENRM (314 aa)). The segment at 142–160 (QQLDLSNCRRNLEPVYEAH) is linker 1. The interval 161–252 (ISNLRKQLEM…CLYDEEISQL (92 aa)) is coil 1B. The interval 253 to 276 (QTHASETSVILSMDNNRDLDLAGI) is linker 12. The coil 2 stretch occupies residues 277 to 415 (IAEVRAHYED…ATYRKLLEGE (139 aa)). The tract at residues 416-495 (ENRMSGENPS…AAGTLARKTT (80 aa)) is tail. Positions 449-495 (DSEAGNAVGSPSTPRNSQSKTRGSSVDPRDAQDESAAAAGTLARKTT) are disordered. Over residues 457–472 (GSPSTPRNSQSKTRGS) the composition is skewed to polar residues.

Belongs to the intermediate filament family. As to quaternary structure, heterotetramer of two type I and two type II keratins. Expressed in epidermis with a particularly strong staining in the nail matrix, nail bed and hyponychium (at protein level).

Has a role in hair formation. Specific component of keratin intermediate filaments in the inner root sheath (IRS) of the hair follicle. The sequence is that of Keratin, type II cytoskeletal 74 from Mus musculus (Mouse).